A 398-amino-acid chain; its full sequence is 1-deoxy-D-xylulose 5-phosphate reductoisomerase (398 aa).

7 residues coordinate NADPH: T10, G11, S12, I13, K37, N38, and N124. 1-deoxy-D-xylulose 5-phosphate is bound at residue K125. E126 contributes to the NADPH binding site. Residue D150 participates in Mn(2+) binding. Positions 151, 152, 186, and 209 each coordinate 1-deoxy-D-xylulose 5-phosphate. Mn(2+) is bound at residue E152. G215 contacts NADPH. Positions 222, 227, 228, and 231 each coordinate 1-deoxy-D-xylulose 5-phosphate. E231 contributes to the Mn(2+) binding site.

This sequence belongs to the DXR family. As to quaternary structure, homodimer. It depends on Mg(2+) as a cofactor. Requires Mn(2+) as cofactor.

It catalyses the reaction 2-C-methyl-D-erythritol 4-phosphate + NADP(+) = 1-deoxy-D-xylulose 5-phosphate + NADPH + H(+). It functions in the pathway isoprenoid biosynthesis; isopentenyl diphosphate biosynthesis via DXP pathway; isopentenyl diphosphate from 1-deoxy-D-xylulose 5-phosphate: step 1/6. Catalyzes the NADPH-dependent rearrangement and reduction of 1-deoxy-D-xylulose-5-phosphate (DXP) to 2-C-methyl-D-erythritol 4-phosphate (MEP). The chain is 1-deoxy-D-xylulose 5-phosphate reductoisomerase from Buchnera aphidicola subsp. Schizaphis graminum (strain Sg).